A 235-amino-acid chain; its full sequence is Endonuclease V (235 aa).

Residues Asp47 and Asp117 each contribute to the Mg(2+) site.

Belongs to the endonuclease V family. Mg(2+) is required as a cofactor.

The protein resides in the cytoplasm. The enzyme catalyses Endonucleolytic cleavage at apurinic or apyrimidinic sites to products with a 5'-phosphate.. In terms of biological role, DNA repair enzyme involved in the repair of deaminated bases. Selectively cleaves double-stranded DNA at the second phosphodiester bond 3' to a deoxyinosine leaving behind the intact lesion on the nicked DNA. This chain is Endonuclease V, found in Protochlamydia amoebophila (strain UWE25).